The following is a 228-amino-acid chain: 2-C-methyl-D-erythritol 4-phosphate cytidylyltransferase (228 aa).

Belongs to the IspD/TarI cytidylyltransferase family. IspD subfamily.

It catalyses the reaction 2-C-methyl-D-erythritol 4-phosphate + CTP + H(+) = 4-CDP-2-C-methyl-D-erythritol + diphosphate. It functions in the pathway isoprenoid biosynthesis; isopentenyl diphosphate biosynthesis via DXP pathway; isopentenyl diphosphate from 1-deoxy-D-xylulose 5-phosphate: step 2/6. Its function is as follows. Catalyzes the formation of 4-diphosphocytidyl-2-C-methyl-D-erythritol from CTP and 2-C-methyl-D-erythritol 4-phosphate (MEP). This Actinobacillus pleuropneumoniae serotype 3 (strain JL03) protein is 2-C-methyl-D-erythritol 4-phosphate cytidylyltransferase.